Here is a 414-residue protein sequence, read N- to C-terminus: WW domain-containing oxidoreductase (414 aa).

The tract at residues Met-1–Glu-23 is disordered. The WW 1 domain occupies Glu-16–Ser-49. The short motif at Gly-50–Val-55 is the Nuclear localization signal element. Residues Gly-57–Leu-90 enclose the WW 2 domain. An NADP(+)-binding site is contributed by Gly-131–Gly-137. Ser-260 is a substrate binding site. Catalysis depends on Tyr-293, which acts as the Proton acceptor.

Belongs to the short-chain dehydrogenases/reductases (SDR) family.

It is found in the cytoplasm. It localises to the mitochondrion. Its subcellular location is the golgi apparatus. The protein localises to the lysosome. In terms of biological role, putative oxidoreductase. Acts as a tumor suppressor and plays a role in apoptosis. May function synergistically with p53/TP53 to control genotoxic stress-induced cell death. Plays a role in TGFB1 signaling and TGFB1-mediated cell death. May also play a role in tumor necrosis factor (TNF)-mediated cell death. Required for normal bone development. Inhibits Wnt signaling. The chain is WW domain-containing oxidoreductase (WWOX) from Gallus gallus (Chicken).